A 550-amino-acid chain; its full sequence is Selinene synthase (550 aa).

The Mg(2+) site is built by Asp314, Asp318, Asp450, and Glu458. Positions 314 to 318 match the DDXXD motif motif; that stretch reads DDIYD.

Belongs to the terpene synthase family. It depends on Mg(2+) as a cofactor. Mn(2+) serves as cofactor.

It catalyses the reaction (2E,6E)-farnesyl diphosphate = (+)-beta-selinene + diphosphate. The catalysed reaction is (2E,6E)-farnesyl diphosphate = alpha-selinene + diphosphate. Its pathway is secondary metabolite biosynthesis; terpenoid biosynthesis. In terms of biological role, sesquiterpene synthase that catalyzes the formation of alpha- and beta-selinene from trans,trans-farnesyl diphosphate (FPP). Also produces some nerolidol. In Ocimum basilicum (Sweet basil), this protein is Selinene synthase (SES).